The primary structure comprises 318 residues: Gamma-glutamyl hydrolase (318 aa).

The signal sequence occupies residues 1-24 (MASPGCLLCVLGLLLCGAASLELS). The Gamma-glutamyl hydrolase domain occupies 25-318 (RPHGDTAKKP…SSFQQCYIFD (294 aa)). The N-linked (GlcNAc...) asparagine glycan is linked to N116. Residue C134 is the Nucleophile of the active site. 2 N-linked (GlcNAc...) asparagine glycosylation sites follow: N163 and N203. The Proton donor role is filled by H244. An N-linked (GlcNAc...) asparagine; partial glycan is attached at N307.

It belongs to the peptidase C26 family. Homodimer.

Its subcellular location is the secreted. It is found in the extracellular space. The protein localises to the lysosome. It localises to the melanosome. The catalysed reaction is (6S)-5,6,7,8-tetrahydrofolyl-(gamma-L-Glu)(n) + (n-1) H2O = (6S)-5,6,7,8-tetrahydrofolate + (n-1) L-glutamate. In terms of biological role, hydrolyzes the polyglutamate sidechains of pteroylpolyglutamates. Progressively removes gamma-glutamyl residues from pteroylpoly-gamma-glutamate to yield pteroyl-alpha-glutamate (folic acid) and free glutamate. May play an important role in the bioavailability of dietary pteroylpolyglutamates and in the metabolism of pteroylpolyglutamates and antifolates. The polypeptide is Gamma-glutamyl hydrolase (Homo sapiens (Human)).